Here is a 117-residue protein sequence, read N- to C-terminus: Large ribosomal subunit protein bL20 (117 aa).

This sequence belongs to the bacterial ribosomal protein bL20 family.

Binds directly to 23S ribosomal RNA and is necessary for the in vitro assembly process of the 50S ribosomal subunit. It is not involved in the protein synthesizing functions of that subunit. In Vibrio metschnikovii, this protein is Large ribosomal subunit protein bL20.